Here is a 337-residue protein sequence, read N- to C-terminus: D-alanine--D-alanine ligase (337 aa).

The 201-residue stretch at 126–326 folds into the ATP-grasp domain; the sequence is KQIWISNGLS…YADLVLWLLS (201 aa). 152-207 lines the ATP pocket; sequence VKHLGLPLIVKPAHEGSSLGLTKVKSVEELPAAYQLAAGLDKKVIAETCIVGDELT. 3 residues coordinate Mg(2+): Asp279, Glu293, and Asn295.

This sequence belongs to the D-alanine--D-alanine ligase family. Requires Mg(2+) as cofactor. It depends on Mn(2+) as a cofactor.

The protein resides in the cytoplasm. The enzyme catalyses 2 D-alanine + ATP = D-alanyl-D-alanine + ADP + phosphate + H(+). It participates in cell wall biogenesis; peptidoglycan biosynthesis. Functionally, cell wall formation. In Polynucleobacter asymbioticus (strain DSM 18221 / CIP 109841 / QLW-P1DMWA-1) (Polynucleobacter necessarius subsp. asymbioticus), this protein is D-alanine--D-alanine ligase.